The chain runs to 514 residues: NAD(P)H-quinone oxidoreductase subunit 2 (514 aa).

Helical transmembrane passes span 16-36, 43-63, 80-100, 110-130, 133-153, 168-188, 211-231, 245-265, 279-299, 307-327, 335-355, 379-399, 411-431, and 467-487; these read IWPE…DLIV, WLPY…YFEW, LSIV…LMSV, LAEF…LSGA, LVMI…MTGY, LLIG…LYGL, LGLA…ISAV, PTPV…ALAI, WHFI…VVAL, MLAY…TANS, IFYL…IILF, LGLS…GFFG, GLYG…YYYI, and VGLV…NPLF.

It belongs to the complex I subunit 2 family. In terms of assembly, NDH-1 can be composed of about 15 different subunits; different subcomplexes with different compositions have been identified which probably have different functions.

The protein localises to the cellular thylakoid membrane. The catalysed reaction is a plastoquinone + NADH + (n+1) H(+)(in) = a plastoquinol + NAD(+) + n H(+)(out). It carries out the reaction a plastoquinone + NADPH + (n+1) H(+)(in) = a plastoquinol + NADP(+) + n H(+)(out). Functionally, NDH-1 shuttles electrons from an unknown electron donor, via FMN and iron-sulfur (Fe-S) centers, to quinones in the respiratory and/or the photosynthetic chain. The immediate electron acceptor for the enzyme in this species is believed to be plastoquinone. Couples the redox reaction to proton translocation, and thus conserves the redox energy in a proton gradient. Cyanobacterial NDH-1 also plays a role in inorganic carbon-concentration. The protein is NAD(P)H-quinone oxidoreductase subunit 2 of Gloeothece citriformis (strain PCC 7424) (Cyanothece sp. (strain PCC 7424)).